The primary structure comprises 230 residues: Ion-translocating oxidoreductase complex subunit E (230 aa).

The next 6 helical transmembrane spans lie at 18–38, 39–59, 63–83, 86–106, 125–145, and 182–202; these read ALVQ…ATNA, LGLG…VSAL, TPAE…VSAV, LINA…PLIV, WLSA…MFVL, and PFLL…MLAV.

The protein belongs to the NqrDE/RnfAE family. The complex is composed of six subunits: RsxA, RsxB, RsxC, RsxD, RsxE and RsxG.

The protein localises to the cell inner membrane. Part of a membrane-bound complex that couples electron transfer with translocation of ions across the membrane. Required to maintain the reduced state of SoxR. The protein is Ion-translocating oxidoreductase complex subunit E of Salmonella agona (strain SL483).